A 137-amino-acid polypeptide reads, in one-letter code: Protein BNS1 (137 aa).

Its function is as follows. Component of the FEAR (CDC14 early anaphase release) network which promotes CDC14 release from the nucleolus during early anaphase and is required for the efficient segregation of telomeric and nucleolar regions. Although BNS1 can partially compensate for a lack of SPO12 function when overexpressed, it does not appear to play any role in controlling meiotic nuclear division. The polypeptide is Protein BNS1 (BNS1) (Saccharomyces cerevisiae (strain ATCC 204508 / S288c) (Baker's yeast)).